The following is a 181-amino-acid chain: Segregation and condensation protein B (181 aa).

It belongs to the ScpB family. Homodimer. Homodimerization may be required to stabilize the binding of ScpA to the Smc head domains. Component of a cohesin-like complex composed of ScpA, ScpB and the Smc homodimer, in which ScpA and ScpB bind to the head domain of Smc. The presence of the three proteins is required for the association of the complex with DNA.

It localises to the cytoplasm. Participates in chromosomal partition during cell division. May act via the formation of a condensin-like complex containing Smc and ScpA that pull DNA away from mid-cell into both cell halves. This Desulforamulus reducens (strain ATCC BAA-1160 / DSM 100696 / MI-1) (Desulfotomaculum reducens) protein is Segregation and condensation protein B.